The primary structure comprises 186 residues: Tegument protein UL55 (186 aa).

This sequence belongs to the alphaherpesvirinae HHV-1 UL55 family.

The protein localises to the virion tegument. It localises to the host nucleus matrix. In Human herpesvirus 2 (strain HG52) (HHV-2), this protein is Tegument protein UL55.